The following is a 618-amino-acid chain: UvrABC system protein C (618 aa).

The region spanning 13–92 is the GIY-YIG domain; that stretch reads DKPGVYLMKN…IKKYRPKYNI (80 aa). One can recognise a UVR domain in the interval 204–239; it reads LDIVENFKLNMEKAAGNLEFEKAAMLRDKINIIEKI.

It belongs to the UvrC family. Interacts with UvrB in an incision complex.

Its subcellular location is the cytoplasm. Functionally, the UvrABC repair system catalyzes the recognition and processing of DNA lesions. UvrC both incises the 5' and 3' sides of the lesion. The N-terminal half is responsible for the 3' incision and the C-terminal half is responsible for the 5' incision. This chain is UvrABC system protein C, found in Clostridium botulinum (strain 657 / Type Ba4).